A 373-amino-acid chain; its full sequence is Dual-specificity RNA methyltransferase RlmN (373 aa).

Glu94 (proton acceptor) is an active-site residue. The Radical SAM core domain maps to 100-339 (EDDRATLCVS…VIVRKTRGDD (240 aa)). A disulfide bond links Cys107 and Cys344. [4Fe-4S] cluster is bound by residues Cys114, Cys118, and Cys121. Residues 168–169 (GE), Ser200, 222–224 (SIH), and Asn301 each bind S-adenosyl-L-methionine. Catalysis depends on Cys344, which acts as the S-methylcysteine intermediate.

The protein belongs to the radical SAM superfamily. RlmN family. Requires [4Fe-4S] cluster as cofactor.

The protein localises to the cytoplasm. The enzyme catalyses adenosine(2503) in 23S rRNA + 2 reduced [2Fe-2S]-[ferredoxin] + 2 S-adenosyl-L-methionine = 2-methyladenosine(2503) in 23S rRNA + 5'-deoxyadenosine + L-methionine + 2 oxidized [2Fe-2S]-[ferredoxin] + S-adenosyl-L-homocysteine. It catalyses the reaction adenosine(37) in tRNA + 2 reduced [2Fe-2S]-[ferredoxin] + 2 S-adenosyl-L-methionine = 2-methyladenosine(37) in tRNA + 5'-deoxyadenosine + L-methionine + 2 oxidized [2Fe-2S]-[ferredoxin] + S-adenosyl-L-homocysteine. Its function is as follows. Specifically methylates position 2 of adenine 2503 in 23S rRNA and position 2 of adenine 37 in tRNAs. m2A2503 modification seems to play a crucial role in the proofreading step occurring at the peptidyl transferase center and thus would serve to optimize ribosomal fidelity. The chain is Dual-specificity RNA methyltransferase RlmN from Shewanella sp. (strain MR-7).